A 39-amino-acid polypeptide reads, in one-letter code: Cytochrome b559 subunit beta (39 aa).

Residues 14–30 form a helical membrane-spanning segment; sequence WLAVHGLAVPTVFFLGS. Residue His18 coordinates heme.

This sequence belongs to the PsbE/PsbF family. In terms of assembly, heterodimer of an alpha subunit and a beta subunit. PSII is composed of 1 copy each of membrane proteins PsbA, PsbB, PsbC, PsbD, PsbE, PsbF, PsbH, PsbI, PsbJ, PsbK, PsbL, PsbM, PsbT, PsbX, PsbY, PsbZ, Psb30/Ycf12, at least 3 peripheral proteins of the oxygen-evolving complex and a large number of cofactors. It forms dimeric complexes. Heme b serves as cofactor.

The protein resides in the plastid. It is found in the chloroplast thylakoid membrane. Its function is as follows. This b-type cytochrome is tightly associated with the reaction center of photosystem II (PSII). PSII is a light-driven water:plastoquinone oxidoreductase that uses light energy to abstract electrons from H(2)O, generating O(2) and a proton gradient subsequently used for ATP formation. It consists of a core antenna complex that captures photons, and an electron transfer chain that converts photonic excitation into a charge separation. The polypeptide is Cytochrome b559 subunit beta (Gnetum gnemon (Spanish joint-fir)).